A 489-amino-acid polypeptide reads, in one-letter code: Phenylalanine--tRNA ligase alpha subunit (489 aa).

L-phenylalanine-binding positions include threonine 316, glutamine 355–aspartate 357, phenylalanine 395, and phenylalanine 420.

It belongs to the class-II aminoacyl-tRNA synthetase family. Phe-tRNA synthetase alpha subunit type 2 subfamily. In terms of assembly, tetramer of two alpha and two beta subunits. Mg(2+) serves as cofactor.

The protein localises to the cytoplasm. The catalysed reaction is tRNA(Phe) + L-phenylalanine + ATP = L-phenylalanyl-tRNA(Phe) + AMP + diphosphate + H(+). The chain is Phenylalanine--tRNA ligase alpha subunit from Pyrobaculum aerophilum (strain ATCC 51768 / DSM 7523 / JCM 9630 / CIP 104966 / NBRC 100827 / IM2).